The sequence spans 446 residues: Saccharopine dehydrogenase [NADP(+), L-glutamate-forming] (446 aa).

NADP(+) is bound by residues 10-13 (SGFV), 33-35 (CRT), 54-55 (DV), I75, 97-98 (SS), 124-126 (LDP), and S174. L-saccharopine contacts are provided by residues 98–99 (SY) and D125. Residues R223 and 244-246 (TLR) contribute to the L-saccharopine site.

The protein belongs to the saccharopine dehydrogenase family. In terms of assembly, interacts with TRM112.

It catalyses the reaction L-saccharopine + NADP(+) + H2O = (S)-2-amino-6-oxohexanoate + L-glutamate + NADPH + H(+). It participates in amino-acid biosynthesis; L-lysine biosynthesis via AAA pathway; L-lysine from L-alpha-aminoadipate (fungal route): step 2/3. The polypeptide is Saccharopine dehydrogenase [NADP(+), L-glutamate-forming] (LYS9) (Saccharomyces cerevisiae (strain ATCC 204508 / S288c) (Baker's yeast)).